A 504-amino-acid polypeptide reads, in one-letter code: ATP synthase subunit alpha (504 aa).

Position 169–176 (169–176) interacts with ATP; the sequence is GDRQTGKT.

This sequence belongs to the ATPase alpha/beta chains family. As to quaternary structure, F-type ATPases have 2 components, CF(1) - the catalytic core - and CF(0) - the membrane proton channel. CF(1) has five subunits: alpha(3), beta(3), gamma(1), delta(1), epsilon(1). CF(0) has three main subunits: a(1), b(2) and c(9-12). The alpha and beta chains form an alternating ring which encloses part of the gamma chain. CF(1) is attached to CF(0) by a central stalk formed by the gamma and epsilon chains, while a peripheral stalk is formed by the delta and b chains.

The protein resides in the cell membrane. It carries out the reaction ATP + H2O + 4 H(+)(in) = ADP + phosphate + 5 H(+)(out). Produces ATP from ADP in the presence of a proton gradient across the membrane. The alpha chain is a regulatory subunit. The polypeptide is ATP synthase subunit alpha (Clostridium botulinum (strain Eklund 17B / Type B)).